A 282-amino-acid chain; its full sequence is Pantothenate synthetase (282 aa).

An ATP-binding site is contributed by 30–37 (MGYFHEGH). The active-site Proton donor is H37. (R)-pantoate is bound at residue Q61. Q61 is a binding site for beta-alanine. 147-150 (GQKD) contacts ATP. Residue Q153 coordinates (R)-pantoate. ATP-binding positions include V176 and 184 to 187 (LSSR).

This sequence belongs to the pantothenate synthetase family. In terms of assembly, homodimer.

It is found in the cytoplasm. The catalysed reaction is (R)-pantoate + beta-alanine + ATP = (R)-pantothenate + AMP + diphosphate + H(+). The protein operates within cofactor biosynthesis; (R)-pantothenate biosynthesis; (R)-pantothenate from (R)-pantoate and beta-alanine: step 1/1. Catalyzes the condensation of pantoate with beta-alanine in an ATP-dependent reaction via a pantoyl-adenylate intermediate. This is Pantothenate synthetase from Maridesulfovibrio salexigens (strain ATCC 14822 / DSM 2638 / NCIMB 8403 / VKM B-1763) (Desulfovibrio salexigens).